The sequence spans 390 residues: Oxysterol-binding protein 10 (390 aa).

Belongs to the OSBP family.

The protein is Oxysterol-binding protein 10 (osbJ) of Dictyostelium discoideum (Social amoeba).